A 255-amino-acid polypeptide reads, in one-letter code: Small ribosomal subunit protein uS2 (255 aa).

Residues 232 to 255 (ASGRDLGASEEVPVEPALEEASEA) form a disordered region.

This sequence belongs to the universal ribosomal protein uS2 family.

The protein is Small ribosomal subunit protein uS2 of Sinorhizobium medicae (strain WSM419) (Ensifer medicae).